Consider the following 974-residue polypeptide: Cell division control protein 15 (974 aa).

Residues 25–272 (YHLKQVIGRG…ADQLLKHVWI (248 aa)) form the Protein kinase domain. ATP-binding positions include 31–39 (IGRGSYGVV) and Lys54. Asp146 serves as the catalytic Proton acceptor. A self association domain region spans residues 360–702 (CSLENIADTI…ITAICVEMSL (343 aa)). The segment covering 554 to 563 (SSSLPLSSSP) has biased composition (low complexity). Residues 554–592 (SSSLPLSSSPTRNSPVNSVQSPSRSPVHSLMATRPSSPM) are disordered. Phosphoserine occurs at positions 561 and 567. The span at 564-579 (TRNSPVNSVQSPSRSP) shows a compositional bias: polar residues. The segment at 751–974 (TVGSSESHSV…FSVPITTFQT (224 aa)) is auto-inhibitory domain. Position 870 is a phosphothreonine (Thr870). Positions 941–974 (AAIGSSPTKDERSNLRSSKDKSDGFSVPITTFQT) are disordered. Basic and acidic residues predominate over residues 948-963 (TKDERSNLRSSKDKSD).

The protein belongs to the protein kinase superfamily. Ser/Thr protein kinase family. In terms of assembly, homodimer. Interacts with TEM1. Phosphorylation by CDK1 reduces the binding to the mother spindle pole body. The extent of phosphorylation gradually increases during cell-cycle progression until some point during late anaphase/telophase when it is rapidly dephosphorylated by CDC14. Phosphorylation inhibits kinase activity and dephosphorylation by CDC14 activates CDC15.

It localises to the cytoplasm. Its subcellular location is the cytoskeleton. The protein resides in the spindle pole. The protein localises to the bud neck. It carries out the reaction L-seryl-[protein] + ATP = O-phospho-L-seryl-[protein] + ADP + H(+). The catalysed reaction is L-threonyl-[protein] + ATP = O-phospho-L-threonyl-[protein] + ADP + H(+). Kinase activity is inhibited by phosphorylation and activated by dephosphorylation by CDC14. In terms of biological role, protein kinase of the mitotic exit network (MEN) essential for late nuclear division in the mitotic cycle. Promotes mitotic exit by phosphorylating DBF2 and directly switching on DBF2 kinase activity. Involved in the localization of DBF2 and DBF20 to the neck which is necessary to undergo cytokinesis. Plays a role in segregation of chromosomes during recovery from spindle checkpoint activation. Required for spindle pole localization of CDK1 and inactivation of CDC2 kinase activity at the end of mitosis. Required for spindle disassembly after meiosis II and plays a role in spore morphogenesis. In Saccharomyces cerevisiae (strain ATCC 204508 / S288c) (Baker's yeast), this protein is Cell division control protein 15 (CDC15).